A 369-amino-acid chain; its full sequence is DNA replication and repair protein RecF (369 aa).

30 to 37 contacts ATP; that stretch reads GQNAQGKT.

The protein belongs to the RecF family.

Its subcellular location is the cytoplasm. Functionally, the RecF protein is involved in DNA metabolism; it is required for DNA replication and normal SOS inducibility. RecF binds preferentially to single-stranded, linear DNA. It also seems to bind ATP. In Acetivibrio thermocellus (strain ATCC 27405 / DSM 1237 / JCM 9322 / NBRC 103400 / NCIMB 10682 / NRRL B-4536 / VPI 7372) (Clostridium thermocellum), this protein is DNA replication and repair protein RecF.